Here is a 346-residue protein sequence, read N- to C-terminus: (R,R)-butanediol dehydrogenase (346 aa).

Residues Cys37, His70, and Glu152 each contribute to the Zn(2+) site.

The protein belongs to the zinc-containing alcohol dehydrogenase family. Homotetramer. Interacts with BrxC. Zn(2+) serves as cofactor.

The protein resides in the cytoplasm. Its subcellular location is the secreted. The enzyme catalyses (R,R)-butane-2,3-diol + NAD(+) = (R)-acetoin + NADH + H(+). In Bacillus subtilis (strain 168), this protein is (R,R)-butanediol dehydrogenase.